Consider the following 194-residue polypeptide: ATP-dependent Clp protease proteolytic subunit 1 (194 aa).

Ser-99 acts as the Nucleophile in catalysis. His-124 is an active-site residue.

Belongs to the peptidase S14 family. As to quaternary structure, fourteen ClpP subunits assemble into 2 heptameric rings which stack back to back to give a disk-like structure with a central cavity, resembling the structure of eukaryotic proteasomes.

It localises to the cytoplasm. It catalyses the reaction Hydrolysis of proteins to small peptides in the presence of ATP and magnesium. alpha-casein is the usual test substrate. In the absence of ATP, only oligopeptides shorter than five residues are hydrolyzed (such as succinyl-Leu-Tyr-|-NHMec, and Leu-Tyr-Leu-|-Tyr-Trp, in which cleavage of the -Tyr-|-Leu- and -Tyr-|-Trp bonds also occurs).. Functionally, cleaves peptides in various proteins in a process that requires ATP hydrolysis. Has a chymotrypsin-like activity. Plays a major role in the degradation of misfolded proteins. In Borreliella burgdorferi (strain ATCC 35210 / DSM 4680 / CIP 102532 / B31) (Borrelia burgdorferi), this protein is ATP-dependent Clp protease proteolytic subunit 1.